The sequence spans 572 residues: Acetyl-coenzyme A synthetase (572 aa).

A CoA-binding site is contributed by Thr260. ATP contacts are provided by residues 333–335 (GEP), 354–359 (DTWWMT), Asp440, and Arg455. A CoA-binding site is contributed by Ser463. Arg466 contacts ATP. Residues Val477, His479, and Ile482 each contribute to the Mg(2+) site. Residue Lys524 coordinates CoA. Lys549 carries the N6-acetyllysine modification.

It belongs to the ATP-dependent AMP-binding enzyme family. Interacts with FloT. It depends on Mg(2+) as a cofactor. Post-translationally, acetylated. Deacetylation by the SIR2-homolog deacetylase activates the enzyme.

It is found in the cell membrane. The protein resides in the membrane raft. It catalyses the reaction acetate + ATP + CoA = acetyl-CoA + AMP + diphosphate. Its function is as follows. Catalyzes the conversion of acetate into acetyl-CoA (AcCoA), an essential intermediate at the junction of anabolic and catabolic pathways. AcsA undergoes a two-step reaction. In the first half reaction, AcsA combines acetate with ATP to form acetyl-adenylate (AcAMP) intermediate. In the second half reaction, it can then transfer the acetyl group from AcAMP to the sulfhydryl group of CoA, forming the product AcCoA. Has a role in growth and sporulation on acetate. The polypeptide is Acetyl-coenzyme A synthetase (acsA) (Bacillus subtilis (strain 168)).